The sequence spans 363 residues: Peptide chain release factor 1 (363 aa).

An N5-methylglutamine modification is found at Gln236. The segment at 286 to 305 is disordered; it reads KKEMERSTMRKSQIGSGDRS.

It belongs to the prokaryotic/mitochondrial release factor family. In terms of processing, methylated by PrmC. Methylation increases the termination efficiency of RF1.

The protein resides in the cytoplasm. Functionally, peptide chain release factor 1 directs the termination of translation in response to the peptide chain termination codons UAG and UAA. This Wolbachia pipientis subsp. Culex pipiens (strain wPip) protein is Peptide chain release factor 1.